The sequence spans 269 residues: Zinc transporter ZupT (269 aa).

8 helical membrane-spanning segments follow: residues 11 to 31 (IALA…LLVL), 40 to 60 (LLAF…LSEI), 80 to 100 (YGTL…HFIP), 125 to 145 (ALLT…ATFF), 158 to 178 (AFAI…PVYF), 187 to 207 (FSAS…GYWL), 217 to 237 (FGWV…DELL), and 249 to 269 (TVYG…LFKW). Positions 136 and 139 each coordinate Fe(2+). Residues Glu-139 and His-164 each contribute to the Zn(2+) site. Fe(2+)-binding residues include Asn-165, Glu-168, and Glu-197. Position 168 (Glu-168) interacts with Zn(2+).

It belongs to the ZIP transporter (TC 2.A.5) family. ZupT subfamily.

Its subcellular location is the cell inner membrane. The catalysed reaction is Zn(2+)(in) = Zn(2+)(out). Functionally, mediates zinc uptake. May also transport other divalent cations. The sequence is that of Zinc transporter ZupT from Stenotrophomonas maltophilia (strain R551-3).